Reading from the N-terminus, the 350-residue chain is uncharacterized protein (350 aa).

Residues aspartate 214, aspartate 225, histidine 289, glutamate 318, and glutamate 332 each contribute to the Mn(2+) site.

Belongs to the peptidase M24B family. The cofactor is Mn(2+).

This is an uncharacterized protein from Staphylococcus saprophyticus subsp. saprophyticus (strain ATCC 15305 / DSM 20229 / NCIMB 8711 / NCTC 7292 / S-41).